The following is a 325-amino-acid chain: Pyruvate dehydrogenase E1 component subunit beta (325 aa).

A thiamine diphosphate-binding site is contributed by Glu60.

As to quaternary structure, heterodimer of an alpha and a beta chain. The cofactor is thiamine diphosphate.

The protein localises to the cytoplasm. It localises to the secreted. The enzyme catalyses N(6)-[(R)-lipoyl]-L-lysyl-[protein] + pyruvate + H(+) = N(6)-[(R)-S(8)-acetyldihydrolipoyl]-L-lysyl-[protein] + CO2. With respect to regulation, activity of the E1 module is inhibited by the pyruvate dehydrogenase inhibitor PdhI. The pyruvate dehydrogenase complex catalyzes the overall conversion of pyruvate to acetyl-CoA and CO(2). It contains multiple copies of three enzymatic components: pyruvate dehydrogenase (E1), dihydrolipoamide acetyltransferase (E2) and lipoamide dehydrogenase (E3). Its function is as follows. The B.subtilis PDH complex also possesses branched-chain 2-oxoacid dehydrogenase (BCDH) activity. This Bacillus subtilis (strain 168) protein is Pyruvate dehydrogenase E1 component subunit beta.